Reading from the N-terminus, the 333-residue chain is 4-hydroxy-3-methylbut-2-enyl diphosphate reductase (333 aa).

Residue cysteine 34 coordinates [4Fe-4S] cluster. (2E)-4-hydroxy-3-methylbut-2-enyl diphosphate is bound by residues histidine 63 and histidine 96. Dimethylallyl diphosphate contacts are provided by histidine 63 and histidine 96. Isopentenyl diphosphate contacts are provided by histidine 63 and histidine 96. Cysteine 118 is a binding site for [4Fe-4S] cluster. Histidine 146 lines the (2E)-4-hydroxy-3-methylbut-2-enyl diphosphate pocket. Histidine 146 serves as a coordination point for dimethylallyl diphosphate. Residue histidine 146 coordinates isopentenyl diphosphate. Glutamate 148 functions as the Proton donor in the catalytic mechanism. Threonine 186 serves as a coordination point for (2E)-4-hydroxy-3-methylbut-2-enyl diphosphate. Cysteine 216 is a [4Fe-4S] cluster binding site. Residues serine 244, serine 245, asparagine 246, and serine 289 each coordinate (2E)-4-hydroxy-3-methylbut-2-enyl diphosphate. 4 residues coordinate dimethylallyl diphosphate: serine 244, serine 245, asparagine 246, and serine 289. Isopentenyl diphosphate is bound by residues serine 244, serine 245, asparagine 246, and serine 289.

The protein belongs to the IspH family. [4Fe-4S] cluster serves as cofactor.

It catalyses the reaction isopentenyl diphosphate + 2 oxidized [2Fe-2S]-[ferredoxin] + H2O = (2E)-4-hydroxy-3-methylbut-2-enyl diphosphate + 2 reduced [2Fe-2S]-[ferredoxin] + 2 H(+). The enzyme catalyses dimethylallyl diphosphate + 2 oxidized [2Fe-2S]-[ferredoxin] + H2O = (2E)-4-hydroxy-3-methylbut-2-enyl diphosphate + 2 reduced [2Fe-2S]-[ferredoxin] + 2 H(+). The protein operates within isoprenoid biosynthesis; dimethylallyl diphosphate biosynthesis; dimethylallyl diphosphate from (2E)-4-hydroxy-3-methylbutenyl diphosphate: step 1/1. It participates in isoprenoid biosynthesis; isopentenyl diphosphate biosynthesis via DXP pathway; isopentenyl diphosphate from 1-deoxy-D-xylulose 5-phosphate: step 6/6. Its function is as follows. Catalyzes the conversion of 1-hydroxy-2-methyl-2-(E)-butenyl 4-diphosphate (HMBPP) into a mixture of isopentenyl diphosphate (IPP) and dimethylallyl diphosphate (DMAPP). Acts in the terminal step of the DOXP/MEP pathway for isoprenoid precursor biosynthesis. The chain is 4-hydroxy-3-methylbut-2-enyl diphosphate reductase from Mycobacterium sp. (strain JLS).